The primary structure comprises 770 residues: Amyloid-beta precursor protein (770 aa).

Positions M1 to A17 are cleaved as a signal peptide. Residues L18–A701 lie on the Extracellular side of the membrane. Residues L28–V123 form a GFLD subdomain region. In terms of domain architecture, E1 spans L28–L189. Disulfide bonds link C38/C62, C73/C117, C98/C105, C133/C187, C144/C174, and C158/C186. N96–H110 contributes to the heparin binding site. The interval D131–L189 is cuBD subdomain. Residues H147, H151, and Y168 each coordinate Cu(2+). The segment at G181–P188 is zinc-binding. Positions 183, 186, and 187 each coordinate Zn(2+). Acidic residues predominate over residues D194–D207. Residues D194–E284 form a disordered region. Position 198 is a phosphoserine; by CK2 (S198). S206 is modified (phosphoserine; by CK1). A sulfotyrosine mark is found at Y217 and Y262. The span at V228 to E264 shows a compositional bias: acidic residues. The segment covering R268 to E281 has biased composition (low complexity). Intrachain disulfides connect C291-C341, C300-C324, and C316-C337. The BPTI/Kunitz inhibitor domain occupies C291–C341. Y336 carries the post-translational modification Sulfotyrosine. Residues V344–P365 carry the OX-2 motif. Residues A374 to L565 enclose the E2 domain. Residues F391–L423 are heparin-binding. S441 is subject to Phosphoserine. The heparin-binding stretch occupies residues F491–K522. Y497 carries the post-translational modification Phosphotyrosine. A collagen-binding region spans residues A523–R540. N-linked (GlcNAc...) asparagine glycosylation is found at N542 and N571. Cu(2+) contacts are provided by H677, Y681, H684, and H685. 4 residues coordinate Zn(2+): H677, Y681, H684, and H685. The interval V695–M722 is interaction with PSEN1. Residues I702–M722 traverse the membrane as a helical segment. The Cytoplasmic portion of the chain corresponds to L723–N770. The Basolateral sorting signal signature appears at K724 to G734. T729 is modified (phosphothreonine). S730 is modified (phosphoserine; by APP-kinase I). The interaction with G(o)-alpha stretch occupies residues H732–K751. T743 carries the post-translational modification Phosphothreonine; by CDK5 and MAPK10. The required for the interaction with KIF5B and for anterograde transport in axons stretch occupies residues G756–N770. Residue Y757 is modified to Phosphotyrosine; by ABL1. The YENPXY motif; contains endocytosis signal signature appears at Y757–Y762. K763 is covalently cross-linked (Glycyl lysine isopeptide (Lys-Gly) (interchain with G-Cter in ubiquitin)).

It belongs to the APP family. Binds, via its C-terminus, to the PID domain of several cytoplasmic proteins, including APBB family members, the APBA family, MAPK8IP1, SHC1 and NUMB and DAB1. Binding to DAB1 inhibits its serine phosphorylation. Interacts (via NPXY motif) with DAB2 (via PID domain); the interaction is impaired by tyrosine phosphorylation of the NPXY motif. Also interacts with GPCR-like protein BPP, APPBP1, IB1, KNS2 (via its TPR domains), APPBP2 (via BaSS) and DDB1. In vitro, it binds MAPT via the MT-binding domains. Associates with microtubules in the presence of ATP and in a kinesin-dependent manner. Interacts, through a C-terminal domain, with GNAO1. Amyloid-beta protein 42 binds CHRNA7 in hippocampal neurons. Amyloid-beta associates with HADH2. Interacts with CPEB1, ANKS1B and AGER. Interacts with ITM2B. Interacts with ITM2C. Interacts with IDE. Can form homodimers; dimerization is enhanced in the presence of Cu(2+) ions. Can form homodimers; this is promoted by heparin binding. Amyloid-beta protein 40 interacts with S100A9. CTF-alpha product of APP interacts with GSAP. Isoform APP695 interacts with SORL1 (via N-terminal ectodomain); this interaction retains APP in the trans-Golgi network and reduces processing into soluble APP-alpha and amyloid-beta peptides. Isoform APP770 interacts with SORL1. The C99 fragment also interacts with SORL1. Interacts with PLD3. Interacts with VDAC1. Interacts with NSG1; could regulate APP processing. Amyloid-beta protein 42 interacts with FPR2. Interacts (via transmembrane region) with PSEN1; the interaction is direct. Interacts with LRRK2. Interacts (via cytoplasmic domain) with KIF5B. Interacts (via C-terminus) with APBB2/FE65L1 (via C-terminus). Interacts (via intracellular domain) with APBB3. Post-translationally, proteolytically processed under normal cellular conditions. Cleavage either by alpha-secretase, beta-secretase or theta-secretase leads to generation and extracellular release of soluble APP peptides, S-APP-alpha and S-APP-beta, and the retention of corresponding membrane-anchored C-terminal fragments, C80, C83 and C99. Subsequent processing of C80 and C83 by gamma-secretase yields P3 peptides. This is the major secretory pathway and is non-amyloidogenic. Alternatively, presenilin/nicastrin-mediated gamma-secretase processing of C99 releases the amyloid-beta proteins, amyloid-beta protein 40 and amyloid-beta protein 42, major components of amyloid plaques, and the cytotoxic C-terminal fragments, gamma-CTF(50), gamma-CTF(57) and gamma-CTF(59). PSEN1 cleavage is more efficient with C83 than with C99 as substrate (in vitro). Amyloid-beta protein 40 and Amyloid-beta protein 42 are cleaved by ACE. Many other minor amyloid-beta peptides, amyloid-beta 1-X peptides, are found in cerebral spinal fluid (CSF) including the amyloid-beta X-15 peptides, produced from the cleavage by alpha-secretase. In terms of processing, proteolytically cleaved by caspases during neuronal apoptosis. Cleavage at Asp-739 by either caspase-3, -8 or -9 results in the production of the neurotoxic C31 peptide and the increased production of amyloid-beta peptides. N- and O-glycosylated. Post-translationally, phosphorylation in the C-terminal on tyrosine, threonine and serine residues is neuron-specific. Phosphorylation can affect APP processing, neuronal differentiation and interaction with other proteins. Phosphorylated on Thr-743 in neuronal cells by Cdc5 kinase and Mapk10, in dividing cells by Cdc2 kinase in a cell-cycle dependent manner with maximal levels at the G2/M phase and, in vitro, by GSK-3-beta. The Thr-743 phosphorylated form causes a conformational change which reduces binding of Fe65 family members. In dopaminergic (DA) neurons, phosphorylation on Thr-743 by LRKK2 promotes the production and the nuclear translocation of the APP intracellular domain (AICD) which induces DA neuron apoptosis. Phosphorylation on Tyr-757 is required for SHC binding. Phosphorylated in the extracellular domain by casein kinases on both soluble and membrane-bound APP. This phosphorylation is inhibited by heparin. In terms of processing, trophic-factor deprivation triggers the cleavage of surface APP by beta-secretase to release sAPP-beta which is further cleaved to release an N-terminal fragment of APP (N-APP). Amyloid-beta peptides are degraded by IDE. Post-translationally, sulfated on tyrosine residues.

The protein localises to the cell membrane. It localises to the membrane. It is found in the perikaryon. The protein resides in the cell projection. Its subcellular location is the growth cone. The protein localises to the clathrin-coated pit. It localises to the early endosome. It is found in the cytoplasmic vesicle. The protein resides in the endoplasmic reticulum. Its subcellular location is the golgi apparatus. The protein localises to the secreted. It localises to the cell surface. It is found in the nucleus. The protein resides in the cytoplasm. In terms of biological role, functions as a cell surface receptor and performs physiological functions on the surface of neurons relevant to neurite growth, neuronal adhesion and axonogenesis. Interaction between APP molecules on neighboring cells promotes synaptogenesis. Involved in cell mobility and transcription regulation through protein-protein interactions. Can promote transcription activation through binding to APBB1-KAT5 and inhibit Notch signaling through interaction with Numb. Couples to apoptosis-inducing pathways such as those mediated by G(o) and JIP. Inhibits G(o)-alpha ATPase activity. Acts as a kinesin I membrane receptor, mediating the axonal transport of beta-secretase and presenilin 1. By acting as a kinesin I membrane receptor, plays a role in axonal anterograde transport of cargo towards synapses in axons. May be involved in copper homeostasis/oxidative stress through copper ion reduction. In vitro, copper-metallated APP induces neuronal death directly or is potentiated through Cu(2+)-mediated low-density lipoprotein oxidation. Can regulate neurite outgrowth through binding to components of the extracellular matrix such as heparin and collagen I and IV. Induces a AGER-dependent pathway that involves activation of p38 MAPK, resulting in internalization of amyloid-beta peptide and mitochondrial dysfunction in cultured cortical neurons. Provides Cu(2+) ions for GPC1 which are required for release of nitric oxide (NO) and subsequent degradation of the heparan sulfate chains on GPC1. Amyloid-beta peptides are lipophilic metal chelators with metal-reducing activity. Binds transient metals such as copper, zinc and iron. Functionally, the gamma-CTF peptides as well as the caspase-cleaved peptides, including C31, are potent enhancers of neuronal apoptosis. This chain is Amyloid-beta precursor protein, found in Macaca fascicularis (Crab-eating macaque).